A 125-amino-acid polypeptide reads, in one-letter code: Snaclec B7 (125 aa).

Cystine bridges form between cysteine 2–cysteine 13, cysteine 30–cysteine 119, and cysteine 96–cysteine 111. The 112-residue stretch at histidine 9 to glutamine 120 folds into the C-type lectin domain. Asparagine 112 is a glycosylation site (N-linked (GlcNAc...) asparagine).

The protein belongs to the snaclec family. Heterodimer; disulfide-linked. In terms of tissue distribution, expressed by the venom gland.

It localises to the secreted. Interferes with one step of hemostasis (modulation of platelet aggregation, or coagulation cascade, for example). The sequence is that of Snaclec B7 from Macrovipera lebetinus (Levantine viper).